Reading from the N-terminus, the 284-residue chain is Acetyl-coenzyme A carboxylase carboxyl transferase subunit beta (284 aa).

One can recognise a CoA carboxyltransferase N-terminal domain in the interval 25-284 (LWVKCPETGA…LCKILTKSVQ (260 aa)).

This sequence belongs to the AccD/PCCB family. As to quaternary structure, acetyl-CoA carboxylase is a heterohexamer composed of biotin carboxyl carrier protein (AccB), biotin carboxylase (AccC) and two subunits each of ACCase subunit alpha (AccA) and ACCase subunit beta (AccD).

It localises to the cytoplasm. The enzyme catalyses N(6)-carboxybiotinyl-L-lysyl-[protein] + acetyl-CoA = N(6)-biotinyl-L-lysyl-[protein] + malonyl-CoA. It participates in lipid metabolism; malonyl-CoA biosynthesis; malonyl-CoA from acetyl-CoA: step 1/1. In terms of biological role, component of the acetyl coenzyme A carboxylase (ACC) complex. Biotin carboxylase (BC) catalyzes the carboxylation of biotin on its carrier protein (BCCP) and then the CO(2) group is transferred by the transcarboxylase to acetyl-CoA to form malonyl-CoA. The sequence is that of Acetyl-coenzyme A carboxylase carboxyl transferase subunit beta from Liberibacter asiaticus (strain psy62).